We begin with the raw amino-acid sequence, 131 residues long: Cyclin-dependent kinase 4 inhibitor B (131 aa).

4 ANK repeats span residues 6–35 (GGDA…DPNR), 39–67 (FGRR…DPNC), 72–101 (TLTR…RLDV), and 105–131 (WGRL…TAGD).

The protein belongs to the CDKN2 cyclin-dependent kinase inhibitor family. In terms of assembly, heterodimer of CDKN2B with CDK4 or CDK6.

In terms of biological role, interacts strongly with CDK4 and CDK6. Potent inhibitor. Potential effector of TGF-beta induced cell cycle arrest. In Bos taurus (Bovine), this protein is Cyclin-dependent kinase 4 inhibitor B (CDKN2B).